The chain runs to 181 residues: HGPRTase-like protein 2 (181 aa).

Belongs to the purine/pyrimidine phosphoribosyltransferase family. Archaeal HPRT subfamily.

Functionally, may catalyze a purine salvage reaction, the substrate is unknown. This is HGPRTase-like protein 2 from Haloquadratum walsbyi (strain DSM 16854 / JCM 12705 / C23).